The following is a 357-amino-acid chain: Acyl-coenzyme A diphosphatase NUDT19 (357 aa).

The Nudix hydrolase domain occupies 10-242; that stretch reads AATVMLAAGW…IWLAPPQFYE (233 aa). The tract at residues 72–93 is disordered; sequence PRFGLGPEPPRQPPFPGLSHGD. Pro residues predominate over residues 78–87; it reads PEPPRQPPFP. Positions 97–118 match the Nudix box motif; sequence AALPDDVALRICAIREAFEEAG. Residues Glu-112 and Glu-116 each coordinate Mg(2+). At Lys-300 the chain carries N6-succinyllysine. The Microbody targeting signal signature appears at 355 to 357; that stretch reads AHL.

It belongs to the Nudix hydrolase family. Monomer. The cofactor is Mg(2+). Requires Mn(2+) as cofactor. As to expression, highly expressed in the kidneys, with lower levels in skeletal muscle and brain (at protein level).

The protein localises to the peroxisome. The catalysed reaction is an acyl-CoA + H2O = an acyl-4'-phosphopantetheine + adenosine 3',5'-bisphosphate + 2 H(+). It carries out the reaction CoA + H2O = (R)-4'-phosphopantetheine + adenosine 3',5'-bisphosphate + 2 H(+). The enzyme catalyses hexanoyl-CoA + H2O = hexanoyl-4'-phosphopantetheine + adenosine 3',5'-bisphosphate + 2 H(+). It catalyses the reaction octanoyl-CoA + H2O = S-octanoyl-4'-phosphopantetheine + adenosine 3',5'-bisphosphate + 2 H(+). The catalysed reaction is butanoyl-CoA + H2O = S-butanoyl-4'-phosphopantetheine + adenosine 3',5'-bisphosphate + 2 H(+). It carries out the reaction propanoyl-CoA + H2O = propanoyl-4'-phosphopantetheine + adenosine 3',5'-bisphosphate + 2 H(+). The enzyme catalyses malonyl-CoA + H2O = malonyl-4'-phosphopantetheine + adenosine 3',5'-bisphosphate + 2 H(+). It catalyses the reaction succinyl-CoA + H2O = succinyl-4'-phosphopantetheine + adenosine 3',5'-bisphosphate + 2 H(+). The catalysed reaction is choloyl-CoA + H2O = S-choloyl-4'-phosphopantetheine + adenosine 3',5'-bisphosphate + 2 H(+). It carries out the reaction 4,8-dimethylnonanoyl-CoA + H2O = S-(4,8-dimethylnonanoyl)-4'-phosphopantetheine + adenosine 3',5'-bisphosphate + 2 H(+). The enzyme catalyses (9Z,12Z,15Z)-octadecatrienoyl-CoA + H2O = S-(9Z,12Z,15Z-octadecatrienoyl)-4'-phosphopantetheine + adenosine 3',5'-bisphosphate + 2 H(+). It catalyses the reaction (9Z,12Z)-octadecadienoyl-CoA + H2O = S-(9Z,12Z-octadecadienoyl)-4'-phosphopantetheine + adenosine 3',5'-bisphosphate + 2 H(+). The catalysed reaction is (9Z)-hexadecenoyl-CoA + H2O = S-(9Z-hexadecenoyl)-4'-phosphopantetheine + adenosine 3',5'-bisphosphate + 2 H(+). It carries out the reaction (9Z)-tetradecenoyl-CoA + H2O = S-(9Z-tetradecenoyl)-4'-phosphopantetheine + adenosine 3',5'-bisphosphate + 2 H(+). The enzyme catalyses (6Z)-octenoyl-CoA + H2O = S-(6Z-octenoyl)-4'-phosphopantetheine + adenosine 3',5'-bisphosphate + 2 H(+). It catalyses the reaction hexadecanoyl-CoA + H2O = S-hexadecanoyl-4'-phosphopantetheine + adenosine 3',5'-bisphosphate + 2 H(+). The catalysed reaction is tetradecanoyl-CoA + H2O = tetradecanoyl-4'-phosphopantetheine + adenosine 3',5'-bisphosphate + 2 H(+). It carries out the reaction dodecanoyl-CoA + H2O = S-dodecanoyl-4'-phosphopantetheine + adenosine 3',5'-bisphosphate + 2 H(+). The enzyme catalyses a 5'-end CoA-ribonucleoside in mRNA + H2O = a 5'-end phospho-adenosine-phospho-ribonucleoside in mRNA + (R)-4'-phosphopantetheine + 2 H(+). Inhibited by chenodeoxycholic acid (CDCA) and its conjugated derivatives, taurochenodeoxycholic acid and glycochenodeoxycholic acid. Inhibited by fluoride. Functionally, fatty acyl-coenzyme A (CoA) diphosphatase that hydrolyzes fatty acyl-CoA to yield acyl-4'-phosphopantetheine and adenosine 3',5'-bisphosphate. Mediates the hydrolysis of a wide range of CoA esters, including choloyl-CoA and branched-chain fatty-acyl-CoA esters and at low substrate concentrations medium and long-chain fatty-acyl-CoA esters are the primary substrates. Highest activity seen with medium-chain acyl-CoA esters and higher rates of activity seen with the unsaturated acyl-CoA esters compared with the saturated esters. Exhibits decapping activity towards dpCoA-capped RNAs in vitro. The sequence is that of Acyl-coenzyme A diphosphatase NUDT19 (Nudt19) from Mus musculus (Mouse).